A 162-amino-acid polypeptide reads, in one-letter code: UPF0178 protein Rsph17029_2512 (162 aa).

The protein belongs to the UPF0178 family.

This is UPF0178 protein Rsph17029_2512 from Cereibacter sphaeroides (strain ATCC 17029 / ATH 2.4.9) (Rhodobacter sphaeroides).